The sequence spans 257 residues: 1-(5-phosphoribosyl)-5-[(5-phosphoribosylamino)methylideneamino] imidazole-4-carboxamide isomerase (257 aa).

Asp-8 acts as the Proton acceptor in catalysis. The active-site Proton donor is Asp-129.

The protein belongs to the HisA/HisF family.

It localises to the cytoplasm. The catalysed reaction is 1-(5-phospho-beta-D-ribosyl)-5-[(5-phospho-beta-D-ribosylamino)methylideneamino]imidazole-4-carboxamide = 5-[(5-phospho-1-deoxy-D-ribulos-1-ylimino)methylamino]-1-(5-phospho-beta-D-ribosyl)imidazole-4-carboxamide. Its pathway is amino-acid biosynthesis; L-histidine biosynthesis; L-histidine from 5-phospho-alpha-D-ribose 1-diphosphate: step 4/9. The polypeptide is 1-(5-phosphoribosyl)-5-[(5-phosphoribosylamino)methylideneamino] imidazole-4-carboxamide isomerase (Crocosphaera subtropica (strain ATCC 51142 / BH68) (Cyanothece sp. (strain ATCC 51142))).